Here is a 417-residue protein sequence, read N- to C-terminus: Alpha-galactosidase (417 aa).

Positions 1 to 55 (MARASSSSSPPSPRLLLLLLVAVAATLLPEAAALGNFTAESRGARWRSRRARRRA) are cleaved as a signal peptide. Residues tryptophan 71, aspartate 106, aspartate 107, cysteine 156, lysine 183, aspartate 185, tryptophan 219, arginine 236, and aspartate 240 each coordinate alpha-D-galactose. 2 disulfide bridges follow: cysteine 76–cysteine 108 and cysteine 156–cysteine 187. Aspartate 185 serves as the catalytic Nucleophile. Catalysis depends on aspartate 240, which acts as the Proton donor.

The protein belongs to the glycosyl hydrolase 27 family.

The enzyme catalyses Hydrolysis of terminal, non-reducing alpha-D-galactose residues in alpha-D-galactosides, including galactose oligosaccharides, galactomannans and galactolipids.. The catalysed reaction is melibiose + H2O = D-galactose + D-glucose. It carries out the reaction raffinose + H2O = sucrose + D-galactose. It catalyses the reaction stachyose + H2O = raffinose + D-galactose. The enzyme catalyses alpha-D-Gal-(1-&gt;6)-beta-D-Man-(1-&gt;4)-beta-D-Man-(1-&gt;4)-D-Man + H2O = beta-D-Man-(1-&gt;4)-beta-D-Man-(1-&gt;4)-D-Man + D-galactose. The catalysed reaction is beta-D-Man-(1-&gt;4)-[alpha-D-Gal-(1-&gt;6)]-beta-D-Man-(1-&gt;4)-beta-D-Man-(1-&gt;4)-D-Man + H2O = beta-D-Man-(1-&gt;4)-beta-D-Man-(1-&gt;4)-beta-D-Man-(1-&gt;4)-D-Man + D-galactose. Its activity is regulated as follows. 1 mM Hg(2+) and Ag(2+) decrease activity by 98% and 96%, respectively. 1 mM Para-chloromercuribenzoic acid (PCMB) completely inhibits enzymatic activity. Hydrolyzes melibiose, raffinose and stachyose in the following decreasing order of reactivity: raffinose, melibiose, stachyose. Acts on both the terminal alpha-galactosyl residue and the side-chain alpha-galactosyl residue of the galactomanno-oligosaccharides. The polypeptide is Alpha-galactosidase (Oryza sativa subsp. japonica (Rice)).